The primary structure comprises 523 residues: MVHWADYIADKIIRERGEKEKYVVESGITPSGYVHVGNFRELFTAYIVGHALRDKGYEVRHIHMWDDYDRFRKVPRNVPQEWKDYLGMPISEVPDPWGCHESYAEHFMRKFEEEVEKLGIEVDFLYASELYKRGEYSEEIRLAFEKRDKIMEILNKYREIAKQPPLPENWWPAMVYCPEHRREAEIIEWDGGWKVKYKCPEGHEGWVDIRSGNVKLRWRVDWPMRWSHFGVDFEPAGKDHLVAGSSYDTGKEIIKEVYGKEAPLSLMYEFVGIKGQKGKMSGSKGNVILLSDLYEVLEPGLVRFIYARHRPNKEIKIDLGLGILNLYDEFDKVERIYFGVEGGKGDDEELRRTYELSMPKKPERLVAQAPFRFLAVLVQLPHLTEEDIINVLIKQGHIPRDLSKEDVERVKLRINLARNWVKKYAPEDVKFSILEKPPEVEVSEDVREAMNEVAEWLENHEEFSVEEFNNILFEVAKRRGISSREWFSTLYRLFIGKERGPRLASFLASLDRSFVIKRLRLEG.

Positions 30–38 (PSGYVHVGN) match the 'HIGH' region motif. Zn(2+)-binding residues include D95, C99, H100, H106, C177, H180, C199, and H203. Positions 279–283 (KMSGS) match the 'KMSKS' region motif.

The protein belongs to the class-I aminoacyl-tRNA synthetase family. Zn(2+) is required as a cofactor.

The protein resides in the cytoplasm. It catalyses the reaction tRNA(Lys) + L-lysine + ATP = L-lysyl-tRNA(Lys) + AMP + diphosphate. The protein is Lysine--tRNA ligase (lysS) of Pyrococcus horikoshii (strain ATCC 700860 / DSM 12428 / JCM 9974 / NBRC 100139 / OT-3).